Consider the following 142-residue polypeptide: uncharacterized protein (142 aa).

The N-acetyltransferase domain occupies 2-142; it reads IHMKQLTSKE…IESYLFRKPV (141 aa).

It belongs to the acetyltransferase family.

This is an uncharacterized protein from Bacillus subtilis (strain 168).